The primary structure comprises 272 residues: MADS-box transcription factor 58 (272 aa).

The disordered stretch occupies residues 1-41 (MHIYKEQEAEPSTGLMMPEPAPVASPGSGGSGGSGSVGAEK). Residues 27–36 (GSGGSGGSGS) show a composition bias toward gly residues. The region spanning 43-103 (GSRGKIEIKR…GRLYEYSNNS (61 aa)) is the MADS-box domain. Residues 129-219 (AQHYQQEAAK…KSKVAESERG (91 aa)) enclose the K-box domain.

In terms of tissue distribution, expressed in the lodicule, stamen carpel and ovule primordia.

It localises to the nucleus. Probable transcription factor involved in the development of floral organs. Acts as a C-class protein in association with MADS3. Involved in the control of lodicule number (whorl 2), stamen specification (whorl 3), floral meristem determinacy and regulation of the carpel morphogenesis (whorl 4). Plays a more predominant role in floral meristem determinacy than MADS3. This chain is MADS-box transcription factor 58 (MADS58), found in Oryza sativa subsp. japonica (Rice).